Here is a 921-residue protein sequence, read N- to C-terminus: TRPM8 channel-associated factor 1 (921 aa).

Positions 542–841 constitute a Peptidase M60 domain; that stretch reads YCWMSTGLYI…TYLQLQEAFG (300 aa).

This sequence belongs to the TCAF family. As to quaternary structure, interacts with TRPM8 (via N-terminus and C-terminus domains); the interaction inhibits TRPM8 channel activity. Interacts with TRPV6.

It localises to the cell membrane. Positively regulates the plasma membrane cation channel TRPM8 activity. Involved in the recruitment of TRPM8 to the cell surface. Promotes prostate cancer cell migration inhibition in a TRPM8-dependent manner. This chain is TRPM8 channel-associated factor 1, found in Bos taurus (Bovine).